The chain runs to 443 residues: Protein IQ-DOMAIN 11 (443 aa).

A calmodulin-binding region spans residues 5 to 20 (KGLFTVLKRIFISEVN). Short sequence motifs (nuclear localization signal) lie at residues 11–18 (LKRIFISE) and 27–34 (RRKWTFWK). A disordered region spans residues 44–65 (ITAPPEHRTSHESHEEQKEEIV). Over residues 48–64 (PEHRTSHESHEEQKEEI) the composition is skewed to basic and acidic residues. IQ domains are found at residues 113-138 (AATR…GIVK) and 139-161 (LQAY…CLQS). Positions 277–293 (FSSKTKPKDETLNEKQL) are enriched in basic and acidic residues. Residues 277–361 (FSSKTKPKDE…PRSFDTQSES (85 aa)) are disordered.

It belongs to the IQD family. In terms of assembly, binds to multiple calmodulin (CaM) in the presence of Ca(2+) and CaM-like proteins. Expressed in hypocotyls, cotyledons, leaves and petioles.

It localises to the nucleus. The protein localises to the cytoplasm. The protein resides in the cytoskeleton. Functionally, may be involved in cooperative interactions with calmodulins or calmodulin-like proteins. Recruits calmodulin proteins to microtubules, thus being a potential scaffold in cellular signaling and trafficking. Regulates cell shape and elongation in aerial organs (i.e. epidermis pavement cells) probably by regulating cortical microtubules (MT) arrays orientation. May associate with nucleic acids and regulate gene expression at the transcriptional or post-transcriptional level. In Arabidopsis thaliana (Mouse-ear cress), this protein is Protein IQ-DOMAIN 11.